Reading from the N-terminus, the 389-residue chain is Flagellar P-ring protein (389 aa).

Residues 1–33 (MRPLVAARRRAAACCALAACMLALAFAPAAARA) form the signal peptide.

This sequence belongs to the FlgI family. The basal body constitutes a major portion of the flagellar organelle and consists of four rings (L,P,S, and M) mounted on a central rod.

Its subcellular location is the periplasm. It localises to the bacterial flagellum basal body. In terms of biological role, assembles around the rod to form the L-ring and probably protects the motor/basal body from shearing forces during rotation. In Burkholderia pseudomallei (strain K96243), this protein is Flagellar P-ring protein.